The sequence spans 317 residues: D-alanine--D-alanine ligase (317 aa).

Positions 111–308 (KRFWNGIGIP…YASLVEKIAQ (198 aa)) constitute an ATP-grasp domain. Position 137–192 (137–192 (EEQMSYPVIVKPSREGSTIGINKAMNRAELDDALIKALEYDSDILVEEFIDGPEFT)) interacts with ATP. Residues Asp262, Glu275, and Asn277 each coordinate Mg(2+).

Belongs to the D-alanine--D-alanine ligase family. Mg(2+) is required as a cofactor. It depends on Mn(2+) as a cofactor.

The protein localises to the cytoplasm. The enzyme catalyses 2 D-alanine + ATP = D-alanyl-D-alanine + ADP + phosphate + H(+). Its pathway is cell wall biogenesis; peptidoglycan biosynthesis. Its function is as follows. Cell wall formation. This chain is D-alanine--D-alanine ligase, found in Marinomonas sp. (strain MWYL1).